A 136-amino-acid polypeptide reads, in one-letter code: MARTKQTARKSTGGKAPRKQLATKAARKSAPTTGGVKKPHRYRPGTVALREIRKYQKSTDLLIRKLPFQRLVREIAQDYKADLRFQSHAVLALQEAAEAYLVGLFEDTNLCAIHAKRVTIMPKDIQLARRIRGERA.

Residues Met-1–Arg-43 form a disordered region. Lys-5 is modified (N6-methylated lysine). At Lys-10 the chain carries N6-acetyllysine; alternate. Residue Lys-10 is modified to N6-methylated lysine; alternate. Ser-11 bears the Phosphoserine mark. Thr-12 carries the phosphothreonine modification. Residue Lys-15 is modified to N6-acetyllysine. 2 positions are modified to N6-acetyllysine; alternate: Lys-19 and Lys-24. An N6-methylated lysine; alternate mark is found at Lys-19 and Lys-24. Position 28 is an N6-methylated lysine (Lys-28). Ser-29 is subject to Phosphoserine. At Lys-37 the chain carries N6-methylated lysine.

This sequence belongs to the histone H3 family. As to quaternary structure, the nucleosome is a histone octamer containing two molecules each of H2A, H2B, H3 and H4 assembled in one H3-H4 heterotetramer and two H2A-H2B heterodimers. The octamer wraps approximately 147 bp of DNA. In terms of processing, acetylation is generally linked to gene activation. Can be acetylated to form H3K9ac, H3K14ac, H3K18ac and H3K23ac. H3K9ac could compete with H3K9me and prevent gene silencing. H3K9ac is restricted to euchromatin. Methylated to form mainly H3K4me, H3K9me, H3K18me, H3K23me, H3K27me and H3K36me. H3K4me1/2/3, H3K9me3, H3K27me3 and H3K36me1/2/3 are typical marks for euchromatin, whereas heterochromatic chromocenters are enriched in H3K9me1/2 and H3K27me1/2. H2BK143ub1 is probably prerequisite for H3K4me. Post-translationally, can be phosphorylated to form H3S10ph, H3T11ph and H3S28ph. Pollen specific.

The protein localises to the nucleus. It is found in the chromosome. Functionally, variant histone H3 which replaces conventional H3 in a wide range of nucleosomes in active genes. Constitutes the predominant form of histone H3 in non-dividing cells and is incorporated into chromatin independently of DNA synthesis. Deposited at sites of nucleosomal displacement throughout transcribed genes, suggesting that it represents an epigenetic imprint of transcriptionally active chromatin. Nucleosomes wrap and compact DNA into chromatin, limiting DNA accessibility to the cellular machineries which require DNA as a template. Histones thereby play a central role in transcription regulation, DNA repair, DNA replication and chromosomal stability. DNA accessibility is regulated via a complex set of post-translational modifications of histones, also called histone code, and nucleosome remodeling. The protein is Histone H3.3a (MPH3) of Lilium longiflorum (Trumpet lily).